The chain runs to 402 residues: Pyridinium-3,5-bisthiocarboxylic acid mononucleotide nickel insertion protein (402 aa).

This sequence belongs to the LarC family.

It catalyses the reaction Ni(II)-pyridinium-3,5-bisthiocarboxylate mononucleotide = pyridinium-3,5-bisthiocarboxylate mononucleotide + Ni(2+). In terms of biological role, involved in the biosynthesis of a nickel-pincer cofactor ((SCS)Ni(II) pincer complex). Binds Ni(2+), and functions in nickel delivery to pyridinium-3,5-bisthiocarboxylic acid mononucleotide (P2TMN), to form the mature cofactor. Is thus probably required for the activation of nickel-pincer cofactor-dependent enzymes. The polypeptide is Pyridinium-3,5-bisthiocarboxylic acid mononucleotide nickel insertion protein (Desulfitobacterium hafniense (strain Y51)).